The sequence spans 127 residues: Unclassified hydrophobin 5 (127 aa).

The signal sequence occupies residues 1–24 (MFNKQTNAIVLLFTFALFATLAVA). 4 cysteine pairs are disulfide-bonded: C39-C107, C46-C101, C47-C92, and C108-C121.

The protein belongs to the fungal hydrophobin family. As to quaternary structure, self-assembles to form functional amyloid fibrils called rodlets. Self-assembly into fibrillar rodlets occurs spontaneously at hydrophobic:hydrophilic interfaces and the rodlets further associate laterally to form amphipathic monolayers.

It localises to the secreted. The protein resides in the cell wall. Its function is as follows. Aerial growth, conidiation, and dispersal of filamentous fungi in the environment rely upon a capability of their secreting small amphipathic proteins called hydrophobins (HPBs) with low sequence identity. Class I can self-assemble into an outermost layer of rodlet bundles on aerial cell surfaces, conferring cellular hydrophobicity that supports fungal growth, development and dispersal; whereas Class II form highly ordered films at water-air interfaces through intermolecular interactions but contribute nothing to the rodlet structure. The chain is Unclassified hydrophobin 5 from Pleurotus ostreatus (strain PC15) (Oyster mushroom).